The sequence spans 358 residues: Tripartite motif-containing protein 54 (358 aa).

The segment at 26-82 adopts an RING-type zinc-finger fold; sequence CPICLEMFSKPVVILPCQHNLCRKCANDVFQASNPLWQSRGSTTVSSGGRFRCPSCR. A B box-type zinc finger spans residues 121–163; the sequence is EQHLMCEEHEEEKINIYCLSCEVPTCSLCKVFGAHKDCEVAPL. Zn(2+)-binding residues include C126, H129, C149, and H155. The mediates microtubule-binding and homooligomerization stretch occupies residues 168 to 211; the sequence is KRQKSELSDGIAMLVAGNDRVQAVITQMEEVCQTIEDNSRRQKQ. Positions 220 to 258 form a coiled coil; it reads LCAVLEERKGELLQALAREQEEKLQRVRGLIRQYGDHLE. In terms of domain architecture, COS spans 271-329; the sequence is MEEPQMALYLQQAKELINKVGAMSKVELAGRPEPGYESMEQFTVRVEHVAEMLRTIDFQ. A disordered region spans residues 326-358; it reads IDFQPGASGEEEEVAPDGEEGSAGPEEERPDGP. Residues 334–345 are compositionally biased toward acidic residues; the sequence is GEEEEVAPDGEE.

As to quaternary structure, homooligomer and heterooligomer. Interacts with tubulin. Interacts with TRIM63 and probably with TRIM55. Specifically expressed in heart and skeletal muscle.

It is found in the cytoplasm. It localises to the cytoskeleton. Its subcellular location is the myofibril. The protein localises to the sarcomere. The protein resides in the z line. In terms of biological role, may bind and stabilize microtubules during myotubes formation. This Homo sapiens (Human) protein is Tripartite motif-containing protein 54 (TRIM54).